The sequence spans 474 residues: Uronate isomerase (474 aa).

The protein belongs to the metallo-dependent hydrolases superfamily. Uronate isomerase family.

The enzyme catalyses D-glucuronate = D-fructuronate. It carries out the reaction aldehydo-D-galacturonate = keto-D-tagaturonate. Its pathway is carbohydrate metabolism; pentose and glucuronate interconversion. The sequence is that of Uronate isomerase from Photorhabdus laumondii subsp. laumondii (strain DSM 15139 / CIP 105565 / TT01) (Photorhabdus luminescens subsp. laumondii).